Consider the following 272-residue polypeptide: Phosphonates import ATP-binding protein PhnC (272 aa).

Residues Leu2–Asp246 form the ABC transporter domain. Gly35–Ser42 provides a ligand contact to ATP. Residues Ala248–Arg272 are disordered. Over residues Pro254–Arg272 the composition is skewed to basic and acidic residues.

Belongs to the ABC transporter superfamily. Phosphonates importer (TC 3.A.1.9.1) family. The complex is composed of two ATP-binding proteins (PhnC), two transmembrane proteins (PhnE) and a solute-binding protein (PhnD).

It localises to the cell inner membrane. The enzyme catalyses phosphonate(out) + ATP + H2O = phosphonate(in) + ADP + phosphate + H(+). In terms of biological role, part of the ABC transporter complex PhnCDE involved in phosphonates import. Responsible for energy coupling to the transport system. The chain is Phosphonates import ATP-binding protein PhnC from Chromohalobacter salexigens (strain ATCC BAA-138 / DSM 3043 / CIP 106854 / NCIMB 13768 / 1H11).